The sequence spans 250 residues: Endomucin (250 aa).

A signal peptide spans Met-1–Gly-20. Low complexity-rich tracts occupy residues Lys-24–Thr-38 and Thr-45–Ser-60. Disordered stretches follow at residues Lys-24–Thr-83 and Asn-105–Ala-153. 3 N-linked (GlcNAc...) asparagine glycosylation sites follow: Asn-46, Asn-115, and Asn-119. Polar residues-rich tracts occupy residues Asn-105 to Pro-135 and Thr-143 to Ala-153. Residues Val-180–Gly-200 traverse the membrane as a helical segment. Positions Pro-210–Asn-250 are disordered. A Phosphoserine modification is found at Ser-226.

In terms of processing, highly O-glycosylated. Sialic acid-rich glycoprotein.

The protein localises to the membrane. In terms of biological role, endothelial sialomucin, also called endomucin or mucin-like sialoglycoprotein, which interferes with the assembly of focal adhesion complexes and inhibits interaction between cells and the extracellular matrix. The polypeptide is Endomucin (Emcn) (Rattus norvegicus (Rat)).